Here is a 526-residue protein sequence, read N- to C-terminus: Glutamyl-tRNA(Gln) amidotransferase subunit A, mitochondrial (526 aa).

K76 functions as the Charge relay system in the catalytic mechanism. Positions 147-166 (QYREKRKQNSHSENEDSNWL) are disordered. Catalysis depends on S171, which acts as the Charge relay system. S195 (acyl-ester intermediate) is an active-site residue.

The protein belongs to the amidase family. GatA subfamily. In terms of assembly, subunit of the heterotrimeric GatCAB amidotransferase (AdT) complex, composed of A (QRSL1), B (GATB) and C (GATC) subunits.

It localises to the mitochondrion. It carries out the reaction L-glutamyl-tRNA(Gln) + L-glutamine + ATP + H2O = L-glutaminyl-tRNA(Gln) + L-glutamate + ADP + phosphate + H(+). Allows the formation of correctly charged Gln-tRNA(Gln) through the transamidation of misacylated Glu-tRNA(Gln) in the mitochondria. The reaction takes place in the presence of glutamine and ATP through an activated gamma-phospho-Glu-tRNA(Gln). This chain is Glutamyl-tRNA(Gln) amidotransferase subunit A, mitochondrial, found in Bos taurus (Bovine).